The sequence spans 423 residues: Phaseolin (423 aa).

A signal peptide spans 1–21 (RRVPLLLLGILFLASLSASFA). N-linked (GlcNAc...) asparagine glycosylation occurs at Asn-28. Cupin type-1 domains lie at 35 to 193 (FYFS…EKIN) and 228 to 383 (KSLD…EDVQ). Asn-243, Asn-332, Asn-390, and Asn-396 each carry an N-linked (GlcNAc...) asparagine glycan. The tract at residues 397–423 (GSYHKNAHPHEQEQQKQQKGRKGAFVY) is disordered. Positions 414–423 (QKGRKGAFVY) are enriched in basic residues.

It belongs to the 7S seed storage protein family. As to quaternary structure, homotrimer.

The protein localises to the vacuole. It is found in the aleurone grain. Its function is as follows. Major seed storage protein. The polypeptide is Phaseolin (PHS) (Phaseolus lunatus (Lima bean)).